Here is a 345-residue protein sequence, read N- to C-terminus: Probable RuBisCO transcriptional regulator (345 aa).

One can recognise an HTH lysR-type domain in the interval phenylalanine 6 to threonine 63. A DNA-binding region (H-T-H motif) is located at residues phenylalanine 23–glutamine 42. Residues leucine 311–threonine 345 form a disordered region. A compositionally biased stretch (basic and acidic residues) spans arginine 328–isoleucine 339.

Belongs to the LysR transcriptional regulatory family.

Functionally, trans-acting transcriptional regulator of RuBisCO genes (rbcL and rbcS) expression. The sequence is that of Probable RuBisCO transcriptional regulator (rbcR) from Synechocystis sp. (strain ATCC 27184 / PCC 6803 / Kazusa).